The following is a 116-amino-acid chain: Large ribosomal subunit protein bL19 (116 aa).

This sequence belongs to the bacterial ribosomal protein bL19 family.

This protein is located at the 30S-50S ribosomal subunit interface and may play a role in the structure and function of the aminoacyl-tRNA binding site. The polypeptide is Large ribosomal subunit protein bL19 (Pseudomonas entomophila (strain L48)).